A 108-amino-acid polypeptide reads, in one-letter code: Protein S100-A15A (108 aa).

Residues 53-88 (KEPYYITELFQAADKNKDNQICFDEFLYILGKLVKD) form the EF-hand domain. 5 residues coordinate Ca(2+): Asp-66, Asn-68, Asp-70, Gln-72, and Glu-77.

This sequence belongs to the S-100 family.

This Pongo abelii (Sumatran orangutan) protein is Protein S100-A15A (S100A15A).